The following is an 80-amino-acid chain: Small ribosomal subunit protein uS17 (80 aa).

This sequence belongs to the universal ribosomal protein uS17 family. Part of the 30S ribosomal subunit.

Its function is as follows. One of the primary rRNA binding proteins, it binds specifically to the 5'-end of 16S ribosomal RNA. This Brucella anthropi (strain ATCC 49188 / DSM 6882 / CCUG 24695 / JCM 21032 / LMG 3331 / NBRC 15819 / NCTC 12168 / Alc 37) (Ochrobactrum anthropi) protein is Small ribosomal subunit protein uS17.